A 339-amino-acid polypeptide reads, in one-letter code: Phenylalanine--tRNA ligase alpha subunit (339 aa).

Positions 1 to 14 are enriched in basic and acidic residues; the sequence is MEAKLKQLEEKAKQ. A disordered region spans residues 1 to 20; sequence MEAKLKQLEEKAKQDIQAST. Glu254 contacts Mg(2+).

The protein belongs to the class-II aminoacyl-tRNA synthetase family. Phe-tRNA synthetase alpha subunit type 1 subfamily. Tetramer of two alpha and two beta subunits. Mg(2+) serves as cofactor.

Its subcellular location is the cytoplasm. The enzyme catalyses tRNA(Phe) + L-phenylalanine + ATP = L-phenylalanyl-tRNA(Phe) + AMP + diphosphate + H(+). The sequence is that of Phenylalanine--tRNA ligase alpha subunit from Alkaliphilus metalliredigens (strain QYMF).